A 225-amino-acid polypeptide reads, in one-letter code: Membrane protein LapB (225 aa).

It to H.influenzae HI_1119.

The protein localises to the cell membrane. This chain is Membrane protein LapB (lapB), found in Mannheimia haemolytica (Pasteurella haemolytica).